Here is a 384-residue protein sequence, read N- to C-terminus: Flap endonuclease 1 (384 aa).

Positions 1–105 (MGIKKLTDLI…GELAKRQARR (105 aa)) are N-domain. Aspartate 34 is a Mg(2+) binding site. DNA is bound at residue arginine 71. Mg(2+) is bound by residues aspartate 87, glutamate 159, glutamate 161, aspartate 180, and aspartate 182. An I-domain region spans residues 123–254 (EVQKFAKRVI…KRAIELIQKH (132 aa)). A DNA-binding site is contributed by glutamate 159. DNA-binding residues include glycine 232 and aspartate 234. Residue aspartate 234 participates in Mg(2+) binding. Residues 338–346 (VQSRMDSFI) are interaction with PCNA. A disordered region spans residues 349–384 (IKKPEDPNDKKKKVTKTPSKPSAKTSKKSSSTFKRK). The span at 364-384 (KTPSKPSAKTSKKSSSTFKRK) shows a compositional bias: low complexity.

The protein belongs to the XPG/RAD2 endonuclease family. FEN1 subfamily. Interacts with PCNA. Three molecules of repg bind to one PCNA trimer with each molecule binding to one PCNA monomer. PCNA stimulates the nuclease activity without altering cleavage specificity. The cofactor is Mg(2+). Post-translationally, phosphorylated. Phosphorylation upon DNA damage induces relocalization to the nuclear plasma.

Its subcellular location is the nucleus. It localises to the nucleolus. The protein resides in the nucleoplasm. It is found in the mitochondrion. Structure-specific nuclease with 5'-flap endonuclease and 5'-3' exonuclease activities involved in DNA replication and repair. During DNA replication, cleaves the 5'-overhanging flap structure that is generated by displacement synthesis when DNA polymerase encounters the 5'-end of a downstream Okazaki fragment. It enters the flap from the 5'-end and then tracks to cleave the flap base, leaving a nick for ligation. Also involved in the long patch base excision repair (LP-BER) pathway, by cleaving within the apurinic/apyrimidinic (AP) site-terminated flap. Acts as a genome stabilization factor that prevents flaps from equilibrating into structures that lead to duplications and deletions. Also possesses 5'-3' exonuclease activity on nicked or gapped double-stranded DNA, and exhibits RNase H activity. Also involved in replication and repair of rDNA and in repairing mitochondrial DNA. In Dictyostelium discoideum (Social amoeba), this protein is Flap endonuclease 1.